We begin with the raw amino-acid sequence, 206 residues long: GCN5-like protein acetyltransferase Rv2170 (206 aa).

The N-acetyltransferase domain occupies 44-205; that stretch reads EHIRRRGWQA…AFAILGRTLP (162 aa). Residue Tyr-176 is the Proton donor of the active site.

It belongs to the acetyltransferase family.

It catalyses the reaction L-lysyl-[protein] + acetyl-CoA = N(6)-acetyl-L-lysyl-[protein] + CoA + H(+). The enzyme catalyses propanoyl-CoA + L-lysyl-[protein] = N(6)-propanoyl-L-lysyl-[protein] + CoA + H(+). The catalysed reaction is succinyl-CoA + L-lysyl-[protein] = N(6)-succinyl-L-lysyl-[protein] + CoA + H(+). Functionally, acetyltransferase involved in the post-translational regulation of the central metabolic enzyme isocitrate dehydrogenase 1 (ICDH-1) through lysine acetylation. Catalyzes the acetylation of ICDH-1 at Lys-30 and Lys-129, using acetyl-CoA as a donor, leading to a reduction of ICDH-1 enzyme activity. Can also use propionyl-CoA and succinyl-CoA as donors. Cannot act on the isocitrate dehydrogenase 2 (ICDH-2). Might play a role in regulating the TCA cycle and methylcitrate cycle when M.tuberculosis utilizes fatty acid as carbon source. In terms of biological role, in addition, it can acetylate the amino group of isoniazid (INH), one of the first-line drugs used for the treatment of tuberculosis, thereby canceling out the drug toxicity. Acts by catalyzing the transfer of an acetyl group from acetyl-CoA to INH. Following acetylation, INH is broken down into isonicotinic acid and acetylhydrazine. M.smegmatis and M.tuberculosis H37Ra strains overexpressing Rv2170 are resistant to INH. Has little or no acetyltransferase activity with other antibiotics such as streptomycin, neomycin, kanamycin, amikacin, apramycin and gentamicin. The protein is GCN5-like protein acetyltransferase Rv2170 of Mycobacterium tuberculosis (strain ATCC 25618 / H37Rv).